A 230-amino-acid polypeptide reads, in one-letter code: Cytidylate kinase (230 aa).

12-20 provides a ligand contact to ATP; sequence GPSGAGKGT.

Belongs to the cytidylate kinase family. Type 1 subfamily.

The protein localises to the cytoplasm. It carries out the reaction CMP + ATP = CDP + ADP. The catalysed reaction is dCMP + ATP = dCDP + ADP. The chain is Cytidylate kinase from Shewanella sp. (strain MR-7).